Reading from the N-terminus, the 606-residue chain is Chaperone protein DnaK (606 aa).

Thr-174 is modified (phosphothreonine; by autocatalysis). A disordered region spans residues 578 to 606 (YTQAGPQGGTNPGGQGGTDGNVNTDYKVY). Positions 583 to 596 (PQGGTNPGGQGGTD) are enriched in gly residues.

Belongs to the heat shock protein 70 family.

Acts as a chaperone. The chain is Chaperone protein DnaK from Caldicellulosiruptor saccharolyticus (strain ATCC 43494 / DSM 8903 / Tp8T 6331).